Consider the following 161-residue polypeptide: Large ribosomal subunit protein mL50 (161 aa).

A disordered region spans residues 27–51 (WGGHSKKEEKEVEENSIIPQEKKEP).

It belongs to the mitochondrion-specific ribosomal protein mL50 family. As to quaternary structure, component of the mitochondrial ribosome large subunit (39S) which comprises a 16S rRNA and about 50 distinct proteins.

It is found in the mitochondrion. This is Large ribosomal subunit protein mL50 (MRPL50) from Gallus gallus (Chicken).